The following is a 162-amino-acid chain: Selenoprotein F (162 aa).

The first 28 residues, 1-28, serve as a signal peptide directing secretion; the sequence is MAAEPGGWLGPALGLRLLLATALQMVSA. Selenocysteine 93 is a non-standard amino acid (selenocysteine).

Belongs to the selenoprotein M/F family. As to quaternary structure, forms a tight complex with UGGT1/UGCGL1. Interacts with UGGT2/UGCGL2. Interacts with RDH11.

The protein resides in the endoplasmic reticulum lumen. In terms of biological role, may be involved in redox reactions associated with the formation of disulfide bonds. May contribute to the quality control of protein folding in the endoplasmic reticulum. May regulate protein folding by enhancing the catalytic activity of UGGT1/UGCGL1 and UGGT2/UGCGL2. In Sus scrofa (Pig), this protein is Selenoprotein F.